Reading from the N-terminus, the 1199-residue chain is Nucleolar protein 6 (1199 aa).

Residues Met-1–Lys-10 are compositionally biased toward basic residues. Disordered stretches follow at residues Met-1–Pro-51 and Lys-1146–Lys-1199. Basic and acidic residues-rich tracts occupy residues His-28–His-37 and Lys-1146–Thr-1169.

The protein belongs to the NRAP family. As to quaternary structure, part of the small subunit (SSU) processome, composed of more than 70 proteins and the RNA chaperone small nucleolar RNA (snoRNA) U3.

Its subcellular location is the nucleus. It is found in the nucleolus. The protein localises to the chromosome. Its function is as follows. Part of the small subunit (SSU) processome, first precursor of the small eukaryotic ribosomal subunit. During the assembly of the SSU processome in the nucleolus, many ribosome biogenesis factors, an RNA chaperone and ribosomal proteins associate with the nascent pre-rRNA and work in concert to generate RNA folding, modifications, rearrangements and cleavage as well as targeted degradation of pre-ribosomal RNA by the RNA exosome. This Drosophila yakuba (Fruit fly) protein is Nucleolar protein 6.